The following is a 195-amino-acid chain: Putative Tricorn-like protease N-terminal subunit (195 aa).

It belongs to the peptidase S41B family.

Its subcellular location is the cytoplasm. Degrades oligopeptides in a sequential manner. The chain is Putative Tricorn-like protease N-terminal subunit (triN) from Sulfurisphaera tokodaii (strain DSM 16993 / JCM 10545 / NBRC 100140 / 7) (Sulfolobus tokodaii).